The sequence spans 91 residues: Large ribosomal subunit protein eL37 (91 aa).

Zn(2+) is bound by residues Cys19, Cys22, Cys34, and Cys37. Residues 19–37 (CRRCGKSSFHIQKKTCASC) form a C4-type zinc finger.

The protein belongs to the eukaryotic ribosomal protein eL37 family. Zn(2+) is required as a cofactor.

Functionally, binds to the 23S rRNA. The protein is Large ribosomal subunit protein eL37 (rpl37) of Dictyostelium discoideum (Social amoeba).